Here is a 429-residue protein sequence, read N- to C-terminus: Glutamate-1-semialdehyde 2,1-aminomutase (429 aa).

An N6-(pyridoxal phosphate)lysine modification is found at lysine 268.

Belongs to the class-III pyridoxal-phosphate-dependent aminotransferase family. HemL subfamily. Homodimer. The cofactor is pyridoxal 5'-phosphate.

Its subcellular location is the cytoplasm. It catalyses the reaction (S)-4-amino-5-oxopentanoate = 5-aminolevulinate. It participates in porphyrin-containing compound metabolism; protoporphyrin-IX biosynthesis; 5-aminolevulinate from L-glutamyl-tRNA(Glu): step 2/2. The chain is Glutamate-1-semialdehyde 2,1-aminomutase from Serratia proteamaculans (strain 568).